A 188-amino-acid chain; its full sequence is Ribosomal RNA small subunit methyltransferase G (188 aa).

S-adenosyl-L-methionine-binding positions include Gly69, Phe74, 119 to 120 (VQ), and Arg134.

Belongs to the methyltransferase superfamily. RNA methyltransferase RsmG family.

It is found in the cytoplasm. It carries out the reaction guanosine(527) in 16S rRNA + S-adenosyl-L-methionine = N(7)-methylguanosine(527) in 16S rRNA + S-adenosyl-L-homocysteine. Specifically methylates the N7 position of guanine in position 527 of 16S rRNA. The polypeptide is Ribosomal RNA small subunit methyltransferase G (Campylobacter jejuni subsp. doylei (strain ATCC BAA-1458 / RM4099 / 269.97)).